A 144-amino-acid chain; its full sequence is Large ribosomal subunit protein uL14 (144 aa).

The segment at N107–R144 is disordered.

It belongs to the universal ribosomal protein uL14 family. As to quaternary structure, part of the 50S ribosomal subunit. Forms a cluster with proteins L3 and L19. In the 70S ribosome, L14 and L19 interact and together make contacts with the 16S rRNA in bridges B5 and B8.

In terms of biological role, binds to 23S rRNA. Forms part of two intersubunit bridges in the 70S ribosome. This is Large ribosomal subunit protein uL14 from Xanthobacter autotrophicus (strain ATCC BAA-1158 / Py2).